Here is a 372-residue protein sequence, read N- to C-terminus: Flagellar P-ring protein (372 aa).

The signal sequence occupies residues 1 to 26; that stretch reads MNLSSLSFRLLATLLGACVVVAPASA.

This sequence belongs to the FlgI family. As to quaternary structure, the basal body constitutes a major portion of the flagellar organelle and consists of four rings (L,P,S, and M) mounted on a central rod.

Its subcellular location is the periplasm. The protein localises to the bacterial flagellum basal body. Assembles around the rod to form the L-ring and probably protects the motor/basal body from shearing forces during rotation. The chain is Flagellar P-ring protein from Xanthomonas oryzae pv. oryzae (strain MAFF 311018).